Consider the following 1744-residue polypeptide: Retrotransposon-like protein 1 (1744 aa).

3 disordered regions span residues 1-416, 823-859, and 1287-1439; these read MIEP…SPEE, READDETSDQPSSDGSDDLSESEPSELQQAGDSDQSG, and SSET…EVPS. Low complexity predominate over residues 19–30; sequence SSKQMESSEGSS. A compositionally biased stretch (polar residues) spans 31–40; that stretch reads NTVEETPGSS. The span at 41 to 80 shows a compositional bias: low complexity; sequence GAQAGAQAGAQAEAQAETQVEAQAEAQAEAQVEAQVEAQA. Polar residues predominate over residues 269–318; it reads DGSNQESSDGSNHELSNGSNHESSFGSNPESSDVSNLESSGGSNQESSDG. A compositionally biased stretch (low complexity) spans 332-361; sequence SDNSNQELSDNSNQESSDSSNQSSDISNQE. 3 stretches are compositionally biased toward acidic residues: residues 385–407, 837–846, and 1291–1437; these read SDQDDTDLGDDEEEEEEEGGEEE, GSDDLSESEP, and EDKE…DEEV. Helical transmembrane passes span 1473-1493 and 1520-1540; these read FFRGLLYWKSLLGVAAVLVML and LILDSTLIASSGMATAIAQLL.

Expressed in placenta and in various tissues in late-fetal stage.

It is found in the membrane. In terms of biological role, plays an essential role in capillaries endothelial cells for the maintenance of feto-maternal interface and for development of the placenta. The chain is Retrotransposon-like protein 1 (Rtl1) from Mus musculus (Mouse).